Consider the following 472-residue polypeptide: MNIDSIVRELIGQASGITADSRSVKPGFIFVCLSEAAKGFVPDAVKAGAKFIVAGNAGGLPHVDHSQIIICPMQHDLYYKLASEFYHASQPEFVAVVTGTNGKTSVADFCRQIWCLTGHTGASMGTLGAIVGNTTLPSSTSFTTPDAVELHKTLSTLRDLQVKYLCMEASSHGMAQKRLYGVKASAAAFTNLSGDHLDYHGSMEKYWATKQKLFSEVLSCEGCAVLNADSEQYGELRELAAGRNIITYGVDTGDVKLARLERNTQGHNITVKVCGEVIYDGAFPVLGKFQISNLLCALAIVAASGSGHRDVPIDRLASPRGRMELIGDRIIIDYAHTSDALKHALTSLKWHGFPQKTVLVFGCGGDRDREKRKTMGMVASQYADVVIVTDDNPRSENPETIRKEIMLHCENAIEIPDRGDAIHYAVNFAIRNNYVLLIAGKGHETTQQIAGKSVEFNDGTAVRRCLSEMQYA.

UDP-N-acetyl-alpha-D-muramoyl-L-alanyl-D-glutamate is bound at residue Ser21. Residue 99-105 (GTNGKTS) coordinates ATP. Residues 143–144 (TT), Ser170, Gln176, and Arg178 each bind UDP-N-acetyl-alpha-D-muramoyl-L-alanyl-D-glutamate. Lys210 bears the N6-carboxylysine mark. Meso-2,6-diaminopimelate is bound by residues Arg367, 391–394 (DNPR), Gly440, and Glu444. Positions 391 to 394 (DNPR) match the Meso-diaminopimelate recognition motif motif.

Belongs to the MurCDEF family. MurE subfamily. Mg(2+) serves as cofactor. In terms of processing, carboxylation is probably crucial for Mg(2+) binding and, consequently, for the gamma-phosphate positioning of ATP.

It localises to the cytoplasm. It carries out the reaction UDP-N-acetyl-alpha-D-muramoyl-L-alanyl-D-glutamate + meso-2,6-diaminopimelate + ATP = UDP-N-acetyl-alpha-D-muramoyl-L-alanyl-gamma-D-glutamyl-meso-2,6-diaminopimelate + ADP + phosphate + H(+). It participates in cell wall biogenesis; peptidoglycan biosynthesis. In terms of biological role, catalyzes the addition of meso-diaminopimelic acid to the nucleotide precursor UDP-N-acetylmuramoyl-L-alanyl-D-glutamate (UMAG) in the biosynthesis of bacterial cell-wall peptidoglycan. The chain is UDP-N-acetylmuramoyl-L-alanyl-D-glutamate--2,6-diaminopimelate ligase from Anaplasma marginale (strain St. Maries).